The chain runs to 61 residues: Large ribosomal subunit protein uL30 (61 aa).

It belongs to the universal ribosomal protein uL30 family. In terms of assembly, part of the 50S ribosomal subunit.

In Dichelobacter nodosus (strain VCS1703A), this protein is Large ribosomal subunit protein uL30.